The sequence spans 661 residues: uncharacterized protein (661 aa).

Residues 25–52 (LLPSEPPVGDMNNEDSDTNTSITQSPTN) form a disordered region. The span at 42–52 (TNTSITQSPTN) shows a compositional bias: polar residues. The SANT domain maps to 246-297 (SMPDIWNEEQHSIFVQQFILHGKKFGKIAEAVPGKNSKECVLHYYLTKRTTD). 4 disordered regions span residues 306 to 329 (TKTKGRRRKKLLPSQRGGKKKSKG), 478 to 499 (YYEPKLEQHSSSKRNSISTRKE), 548 to 570 (PMKMPLTPRRASTGPRPRPTFQL), and 604 to 633 (RIDELSVEDQEHTTHSSHTTSDINAFPNSQ). Positions 308 to 328 (TKGRRRKKLLPSQRGGKKKSK) are enriched in basic residues. Over residues 478–487 (YYEPKLEQHS) the composition is skewed to basic and acidic residues. Basic and acidic residues predominate over residues 604-617 (RIDELSVEDQEHTT).

Its subcellular location is the nucleus. This is an uncharacterized protein from Schizosaccharomyces pombe (strain 972 / ATCC 24843) (Fission yeast).